Consider the following 435-residue polypeptide: Gamma-glutamyl phosphate reductase (435 aa).

This sequence belongs to the gamma-glutamyl phosphate reductase family.

The protein localises to the cytoplasm. It carries out the reaction L-glutamate 5-semialdehyde + phosphate + NADP(+) = L-glutamyl 5-phosphate + NADPH + H(+). The protein operates within amino-acid biosynthesis; L-proline biosynthesis; L-glutamate 5-semialdehyde from L-glutamate: step 2/2. Functionally, catalyzes the NADPH-dependent reduction of L-glutamate 5-phosphate into L-glutamate 5-semialdehyde and phosphate. The product spontaneously undergoes cyclization to form 1-pyrroline-5-carboxylate. The sequence is that of Gamma-glutamyl phosphate reductase from Bradyrhizobium diazoefficiens (strain JCM 10833 / BCRC 13528 / IAM 13628 / NBRC 14792 / USDA 110).